We begin with the raw amino-acid sequence, 242 residues long: Copper transport protein B (242 aa).

2 helical membrane-spanning segments follow: residues 8–28 (ICLCFVISSPYVYLVSIACVL) and 86–106 (ITGPFSLLMSLIVIVLLTAGY). A disordered region spans residues 153 to 175 (ESATTNVPSSQTPNESSPLVAGR). Over residues 154–169 (SATTNVPSSQTPNESS) the composition is skewed to polar residues. 2 helical membrane passes run 187-207 (IILAALYAVQVFYSFFIMLLF) and 210-230 (YNGFVMLAVAVGAFAGYLVFG).

It belongs to the copper transporter (Ctr) (TC 1.A.56) family. SLC31A subfamily.

The protein localises to the membrane. Functionally, transporter that is probably involved in the transport of copper, even if it does not act as a major copper transporter. In Aspergillus fumigatus (strain ATCC MYA-4609 / CBS 101355 / FGSC A1100 / Af293) (Neosartorya fumigata), this protein is Copper transport protein B.